A 194-amino-acid polypeptide reads, in one-letter code: MTIKLIVGLANPGAEYAATRHNAGAWYVDLLADRHRAPLREESKFFGYTSRINLAGEDVRLLVPTTFMNLSGKAVAAMATFYRINPDEILVAHDELDLPPGVAKFKLGGGHGGHNGLKDIISKLGNNPNFHRLRVGIGHPGDKNKVVGFVLGKPPASEQKLIDDAVDEAARCTEIWLKDGLTKATNRLHAFKAQ.

Tyr-16 lines the tRNA pocket. His-21 serves as the catalytic Proton acceptor. Residues Phe-67, Asn-69, and Asn-115 each contribute to the tRNA site.

The protein belongs to the PTH family. Monomer.

Its subcellular location is the cytoplasm. It catalyses the reaction an N-acyl-L-alpha-aminoacyl-tRNA + H2O = an N-acyl-L-amino acid + a tRNA + H(+). Its function is as follows. Hydrolyzes ribosome-free peptidyl-tRNAs (with 1 or more amino acids incorporated), which drop off the ribosome during protein synthesis, or as a result of ribosome stalling. In terms of biological role, catalyzes the release of premature peptidyl moieties from peptidyl-tRNA molecules trapped in stalled 50S ribosomal subunits, and thus maintains levels of free tRNAs and 50S ribosomes. The polypeptide is Peptidyl-tRNA hydrolase (Klebsiella pneumoniae (strain 342)).